The chain runs to 256 residues: Thiazole synthase (256 aa).

The active-site Schiff-base intermediate with DXP is the lysine 95. 1-deoxy-D-xylulose 5-phosphate is bound by residues glycine 156, 182-183, and 204-205; these read AG and NT.

This sequence belongs to the ThiG family. As to quaternary structure, homotetramer. Forms heterodimers with either ThiH or ThiS.

The protein resides in the cytoplasm. It carries out the reaction [ThiS sulfur-carrier protein]-C-terminal-Gly-aminoethanethioate + 2-iminoacetate + 1-deoxy-D-xylulose 5-phosphate = [ThiS sulfur-carrier protein]-C-terminal Gly-Gly + 2-[(2R,5Z)-2-carboxy-4-methylthiazol-5(2H)-ylidene]ethyl phosphate + 2 H2O + H(+). Its pathway is cofactor biosynthesis; thiamine diphosphate biosynthesis. Catalyzes the rearrangement of 1-deoxy-D-xylulose 5-phosphate (DXP) to produce the thiazole phosphate moiety of thiamine. Sulfur is provided by the thiocarboxylate moiety of the carrier protein ThiS. In vitro, sulfur can be provided by H(2)S. This chain is Thiazole synthase, found in Idiomarina loihiensis (strain ATCC BAA-735 / DSM 15497 / L2-TR).